The chain runs to 499 residues: Tyrosine-protein kinase Blk (499 aa).

Residues 1 to 34 (MGLLSSKRQVSEKGKGWSPVKIRTQDKAPPPLPP) form a disordered region. G2 carries the N-myristoyl glycine lipid modification. The SH3 domain occupies 52–112 (EEERFVVALF…PSNFVAPVET (61 aa)). Positions 118–214 (WFFRTISRKD…GLCQKLTLPC (97 aa)) constitute an SH2 domain. Residues 235 to 488 (LKLVRKLGSG…FLQSVLEDFY (254 aa)) enclose the Protein kinase domain. ATP-binding positions include 241 to 249 (LGSGQFGEV) and K263. Residue D354 is the Proton acceptor of the active site. A Phosphotyrosine; by autocatalysis modification is found at Y383.

This sequence belongs to the protein kinase superfamily. Tyr protein kinase family. SRC subfamily. As to quaternary structure, interacts with CBL (via SH2 domain). Interacts with CD79A and CD79B (via SH2 domain). In terms of processing, phosphorylated on tyrosine residues after antibody-mediated surface engagement of the B-cell antigen receptor (BCR). Ubiquitination of activated BLK by the UBE3A ubiquitin protein ligase leads to its degradation by the ubiquitin-proteasome pathway. Expressed in immature Vgamma2 gamma-delta T-cells (at protein level). Expressed in the B-cell lineage.

Its subcellular location is the cell membrane. It carries out the reaction L-tyrosyl-[protein] + ATP = O-phospho-L-tyrosyl-[protein] + ADP + H(+). Antibody-mediated surface engagement of the B-cell antigen receptor (BCR) which results in the phosphorylation of BLK on tyrosine residues, stimulates the enzymatic activity. In terms of biological role, non-receptor tyrosine kinase involved in B-lymphocyte development, differentiation and signaling. B-cell receptor (BCR) signaling requires a tight regulation of several protein tyrosine kinases and phosphatases, and associated coreceptors. Binding of antigen to the B-cell antigen receptor (BCR) triggers signaling that ultimately leads to B-cell activation. Signaling through BLK plays an important role in transmitting signals through surface immunoglobulins and supports the pro-B to pre-B transition, as well as the signaling for growth arrest and apoptosis downstream of B-cell receptor. Specifically binds and phosphorylates CD79A at 'Tyr-188'and 'Tyr-199', as well as CD79B at 'Tyr-196' and 'Tyr-207'. Also phosphorylates the immunoglobulin G receptor FCGR2. With FYN and LYN, plays an essential role in pre-B-cell receptor (pre-BCR)-mediated NF-kappa-B activation. Also contributes to BTK activation by indirectly stimulating BTK intramolecular autophosphorylation. In pancreatic islets, acts as a modulator of beta-cells function through the up-regulation of PDX1 and NKX6-1 and consequent stimulation of insulin secretion in response to glucose. Phosphorylates CGAS, promoting retention of CGAS in the cytosol. This is Tyrosine-protein kinase Blk (Blk) from Mus musculus (Mouse).